The chain runs to 281 residues: N-methyltransferase tcpN (281 aa).

It belongs to the methyltransferase superfamily. LaeA methyltransferase family.

It participates in secondary metabolite biosynthesis. In terms of biological role, N-methyltransferase; part of the gene cluster that mediates the biosynthesis of an unusual class of epipolythiodioxopiperazines (ETPs) lacking the reactive thiol group important for toxicity. Firstly, L-tyrosine is prenylated by tcpD, before undergoing condensation with L-glycine in a reaction catalyzed by the NRPS tcpP leading to the diketopiperazine (DKP) backbone. Afterwards the alpha-carbon of tyrosine is oxidized by the cytochrome P450 tcpC to form a hydroxyl group. However, in contrast other ETP biosynthesis pathways studied so far, tcpC is not able to bishydroxylate the DKP at both alpha-carbon positions, but hydroxylates the alpha-carbon of the tyrosine part and the nitrogen of the glycine part. The next steps involve an alpha,beta-elimination reaction catalyzed by tcpI, a methylation by the methyltransferase tcpN the action of the four enzyme cascade tcpG/K/J/I. Due to a dysfunctional cytochrome P450 monooxygenase tcpC, the pathway leads to the biosynthesis of probable non-toxic metabolites lacking the reactive thiol group. The chain is N-methyltransferase tcpN from Claviceps purpurea (strain 20.1) (Ergot fungus).